Here is a 320-residue protein sequence, read N- to C-terminus: Sucrose operon repressor (320 aa).

One can recognise an HTH lacI-type domain in the interval 1–55 (MKNIADIAKIAGVSKSTVSRYLNNGSVSLKTQQKLDEIIRENDYQPNQFAQSLRA). The segment at residues 4–23 (IADIAKIAGVSKSTVSRYLN) is a DNA-binding region (H-T-H motif).

Functionally, negative regulator of scrB expression. This chain is Sucrose operon repressor (scrR), found in Staphylococcus xylosus.